Consider the following 198-residue polypeptide: Na(+)-translocating NADH-quinone reductase subunit E (198 aa).

6 helical membrane-spanning segments follow: residues 11-31 (SIFI…FLAV), 39-59 (FGLG…NNLV), 77-97 (FLNF…LEMI), 110-130 (GIFL…SFMV), 140-160 (VVYG…LAGI), and 176-196 (LGIT…FSGV).

The protein belongs to the NqrDE/RnfAE family. Composed of six subunits; NqrA, NqrB, NqrC, NqrD, NqrE and NqrF.

It localises to the cell inner membrane. The enzyme catalyses a ubiquinone + n Na(+)(in) + NADH + H(+) = a ubiquinol + n Na(+)(out) + NAD(+). NQR complex catalyzes the reduction of ubiquinone-1 to ubiquinol by two successive reactions, coupled with the transport of Na(+) ions from the cytoplasm to the periplasm. NqrA to NqrE are probably involved in the second step, the conversion of ubisemiquinone to ubiquinol. This is Na(+)-translocating NADH-quinone reductase subunit E from Vibrio vulnificus (strain CMCP6).